The chain runs to 261 residues: Hydroxyethylthiazole kinase (261 aa).

M40 contributes to the substrate binding site. ATP-binding residues include K116 and T162. G189 serves as a coordination point for substrate.

It belongs to the Thz kinase family. Mg(2+) is required as a cofactor.

The catalysed reaction is 5-(2-hydroxyethyl)-4-methylthiazole + ATP = 4-methyl-5-(2-phosphooxyethyl)-thiazole + ADP + H(+). It functions in the pathway cofactor biosynthesis; thiamine diphosphate biosynthesis; 4-methyl-5-(2-phosphoethyl)-thiazole from 5-(2-hydroxyethyl)-4-methylthiazole: step 1/1. Functionally, catalyzes the phosphorylation of the hydroxyl group of 4-methyl-5-beta-hydroxyethylthiazole (THZ). This is Hydroxyethylthiazole kinase from Methanosarcina mazei (strain ATCC BAA-159 / DSM 3647 / Goe1 / Go1 / JCM 11833 / OCM 88) (Methanosarcina frisia).